Here is a 157-residue protein sequence, read N- to C-terminus: Probable succinate transporter subunit YjjB (157 aa).

5 helical membrane passes run 8 to 28, 34 to 54, 55 to 75, 87 to 107, and 129 to 149; these read LALMQDMILSAIPAVGFAMVF, ALPWCALLGALGHGLRMLMMS, AGFNIEWSTFMASLLVGSIGI, VFTVAAVIPMFPGISAYTAMI, and FLKASSIVGALSIGLSVPGLW.

Belongs to the ThrE exporter (TC 2.A.79) family. The transporter is composed of YjjB and YjjP.

The protein localises to the cell inner membrane. Involved in succinate export with YjjP. Both proteins are required for export. This is Probable succinate transporter subunit YjjB from Salmonella typhi.